The following is a 184-amino-acid chain: MAKAPTFFSKLLKQILFANRKPFLYYKLALILFVGFVILFQVFMLRAALNGEKGINGANGTDVARSSFISIYVIGNKGVGFSLLADQPGLVYFLQGFLSFIALFFLVFSTSYNYIFWITTLAFGSLGNFFDRLTSGSGEVLDYFVFSGGNSVFNLADCCITFSFIGLFLSFLIQFFKEMKQTKS.

Helical transmembrane passes span 23–43 (FLYY…FQVF), 88–108 (PGLV…FLVF), and 110–130 (TSYN…GNFF). Active-site residues include aspartate 142 and aspartate 157. The helical transmembrane segment at 156–176 (ADCCITFSFIGLFLSFLIQFF) threads the bilayer.

It belongs to the peptidase A8 family.

It localises to the cell membrane. The enzyme catalyses Release of signal peptides from bacterial membrane prolipoproteins. Hydrolyzes -Xaa-Yaa-Zaa-|-(S,diacylglyceryl)Cys-, in which Xaa is hydrophobic (preferably Leu), and Yaa (Ala or Ser) and Zaa (Gly or Ala) have small, neutral side chains.. The protein operates within protein modification; lipoprotein biosynthesis (signal peptide cleavage). Functionally, this protein specifically catalyzes the removal of signal peptides from prolipoproteins. In Mycoplasma pneumoniae (strain ATCC 29342 / M129 / Subtype 1) (Mycoplasmoides pneumoniae), this protein is Lipoprotein signal peptidase.